A 361-amino-acid chain; its full sequence is Ornithine carbamoyltransferase, mitochondrial (361 aa).

The N-terminal 24 residues, 1–24 (MIPTARCGALRQKIPVQAVRQYSS), are a transit peptide targeting the mitochondrion. Carbamoyl phosphate-binding positions include 89–92 (STRT), arginine 140, histidine 167, and glutamine 170. L-ornithine contacts are provided by asparagine 207, aspartate 273, serine 277, and methionine 278. Cysteine 315 serves as the catalytic Proton acceptor. Carbamoyl phosphate-binding positions include 315–316 (CL) and arginine 342.

This sequence belongs to the aspartate/ornithine carbamoyltransferase superfamily. OTCase family. As to quaternary structure, homotrimer.

Its subcellular location is the mitochondrion matrix. The enzyme catalyses carbamoyl phosphate + L-ornithine = L-citrulline + phosphate + H(+). The protein operates within amino-acid biosynthesis; L-arginine biosynthesis; L-arginine from L-ornithine and carbamoyl phosphate: step 1/3. This Aspergillus terreus protein is Ornithine carbamoyltransferase, mitochondrial (arg1).